The chain runs to 261 residues: Acetylglutamate kinase (261 aa).

Residues 48 to 49 (GG), Arg-70, and Asn-164 contribute to the substrate site.

This sequence belongs to the acetylglutamate kinase family. ArgB subfamily.

It is found in the cytoplasm. The enzyme catalyses N-acetyl-L-glutamate + ATP = N-acetyl-L-glutamyl 5-phosphate + ADP. Its pathway is amino-acid biosynthesis; L-arginine biosynthesis; N(2)-acetyl-L-ornithine from L-glutamate: step 2/4. In terms of biological role, catalyzes the ATP-dependent phosphorylation of N-acetyl-L-glutamate. The polypeptide is Acetylglutamate kinase (Roseiflexus sp. (strain RS-1)).